Here is a 703-residue protein sequence, read N- to C-terminus: Glycogen [starch] synthase, liver (703 aa).

Ser8 is modified (phosphoserine; by PKA). The residue at position 11 (Ser11) is a Phosphoserine. Lys40 contributes to the UDP binding site. His205 and Arg211 together coordinate UDP-alpha-D-glucose. Residues His291, Glu292, Gln294, His297, and Lys301 each coordinate alpha-D-glucose 6-phosphate. Arg331 is a binding site for UDP. A UDP-alpha-D-glucose-binding site is contributed by Arg331. His501 serves as a coordination point for alpha-D-glucose 6-phosphate. Residues Glu510, Trp512, and Gly513 each contribute to the UDP-alpha-D-glucose site. Thr515 is a UDP binding site. Alpha-D-glucose 6-phosphate contacts are provided by Arg582 and Arg586. The residue at position 627 (Ser627) is a Phosphoserine. A disordered region spans residues 628–703 (PPTTEGFKYP…KKKLHGEYKN (76 aa)). 4 positions are modified to phosphoserine; by GSK3-alpha and GSK3-beta: Ser641, Ser645, Ser649, and Ser653. A compositionally biased stretch (low complexity) spans 647–657 (SGSQASSPQSS). Ser657 is modified (phosphoserine; by CK2). Acidic residues predominate over residues 658–674 (DVEDEVEDERYDEEEEA). Ser683 is modified (phosphoserine).

The protein belongs to the glycosyltransferase 3 family. As to quaternary structure, part of the glycogen synthase (GS)-glycogenin complex, a heterooctamer composed of a tetramer of GS and 2 dimers of glycogenin, where each GS protomer binds to one glycogenin subunit (via glycogenin C-terminus); the GS tetramer may dissociate from glycogenin dimers to continue glycogen polymerization on its own. May also form a heterooctamer complex with GYG1 (via GYG1 C-terminus). Post-translationally, primed phosphorylation at Ser-657 (site 5) by CSNK2A1 and CSNK2A2 is required for inhibitory phosphorylation at Ser-641 (site 3a), Ser-645 (site 3b), Ser-649 (site 3c) and Ser-653 (site 4) by GSK3A an GSK3B. Dephosphorylation at Ser-641 and Ser-645 by PP1 activates the enzyme. Phosphorylation at Ser-8 is not required for interaction with GYG1. Interaction with GYG1 does not regulate the phosphorylation at Ser-8 and Ser-641. As to expression, specifically expressed in liver (at protein level).

The enzyme catalyses [(1-&gt;4)-alpha-D-glucosyl](n) + UDP-alpha-D-glucose = [(1-&gt;4)-alpha-D-glucosyl](n+1) + UDP + H(+). It functions in the pathway glycan biosynthesis; glycogen biosynthesis. With respect to regulation, allosteric activation by glucose-6-phosphate. Phosphorylation reduces the activity towards UDP-glucose. When in the non-phosphorylated state, glycogen synthase does not require glucose-6-phosphate as an allosteric activator; when phosphorylated it does. In terms of biological role, glycogen synthase participates in the glycogen biosynthetic process along with glycogenin and glycogen branching enzyme. Extends the primer composed of a few glucose units formed by glycogenin by adding new glucose units to it. In this context, glycogen synthase transfers the glycosyl residue from UDP-Glc to the non-reducing end of alpha-1,4-glucan. This chain is Glycogen [starch] synthase, liver, found in Homo sapiens (Human).